We begin with the raw amino-acid sequence, 226 residues long: MMLEIPDVLTSAQLRQCREALEKAAWQDGRQTAGHMAAQAKNNQQLAQDDPLSVELGEFLLDRLGKTDRFIAAALPLKVLPPRFNRYSGGGNYGNHVDAAIFSVPGTPHRIRSDISATLFFSEPDEYEGGELIVEDTYGSHAIKLPAGHMVLYPGTSLHRVAPVTKGVRLASFFWVQSLVREDSQRAMLWELDGAIQRVTLDTPESPALPQLMALYHNLLRRWSNT.

The 101-residue stretch at 78–178 (KVLPPRFNRY…RLASFFWVQS (101 aa)) folds into the Fe2OG dioxygenase domain. Fe cation contacts are provided by His96, Asp98, and His159. Residue Arg169 participates in 2-oxoglutarate binding.

Fe(2+) is required as a cofactor. Requires L-ascorbate as cofactor.

In Parvibaculum lavamentivorans (strain DS-1 / DSM 13023 / NCIMB 13966), this protein is PKHD-type hydroxylase Plav_0377.